We begin with the raw amino-acid sequence, 661 residues long: Heme transporter BhuA (661 aa).

An N-terminal signal peptide occupies residues 1-23; the sequence is MKFTRTLVLASTFLLATVATSQA. The region spanning 48–159 is the TBDR plug domain; sequence KDNIEATGGT…AAGAIRYETV (112 aa). Residues 170-661 form the TBDR beta-barrel domain; that stretch reads TFGARIIGSY…TFTFQTAFKF (492 aa).

This sequence belongs to the TonB-dependent receptor family.

The protein resides in the cell outer membrane. Functionally, heme transporter. In Brucella suis biovar 1 (strain 1330), this protein is Heme transporter BhuA (bhuA).